The following is a 208-amino-acid chain: ATP-dependent Clp protease proteolytic subunit (208 aa).

The active-site Nucleophile is the Ser107. His132 is an active-site residue.

It belongs to the peptidase S14 family. Fourteen ClpP subunits assemble into 2 heptameric rings which stack back to back to give a disk-like structure with a central cavity, resembling the structure of eukaryotic proteasomes.

It localises to the cytoplasm. It carries out the reaction Hydrolysis of proteins to small peptides in the presence of ATP and magnesium. alpha-casein is the usual test substrate. In the absence of ATP, only oligopeptides shorter than five residues are hydrolyzed (such as succinyl-Leu-Tyr-|-NHMec, and Leu-Tyr-Leu-|-Tyr-Trp, in which cleavage of the -Tyr-|-Leu- and -Tyr-|-Trp bonds also occurs).. In terms of biological role, cleaves peptides in various proteins in a process that requires ATP hydrolysis. Has a chymotrypsin-like activity. Plays a major role in the degradation of misfolded proteins. This chain is ATP-dependent Clp protease proteolytic subunit, found in Jannaschia sp. (strain CCS1).